A 100-amino-acid chain; its full sequence is uncharacterized protein (100 aa).

The first 17 residues, 1–17 (MTMKYFCSVMIAIALVG), serve as a signal peptide directing secretion. Cys-18 carries the N-palmitoyl cysteine lipid modification. Cys-18 is lipidated: S-diacylglycerol cysteine.

It localises to the cell membrane. This is an uncharacterized protein from Salmonella paratyphi A (strain ATCC 9150 / SARB42).